We begin with the raw amino-acid sequence, 556 residues long: Formate--tetrahydrofolate ligase (556 aa).

Residue 65-72 (TPAGEGKS) coordinates ATP.

It belongs to the formate--tetrahydrofolate ligase family.

It catalyses the reaction (6S)-5,6,7,8-tetrahydrofolate + formate + ATP = (6R)-10-formyltetrahydrofolate + ADP + phosphate. It functions in the pathway one-carbon metabolism; tetrahydrofolate interconversion. This is Formate--tetrahydrofolate ligase from Clostridium perfringens (strain 13 / Type A).